The following is a 1527-amino-acid chain: Lysophospholipase nte1 (1527 aa).

Residues 1-69 (MADDGGPFPL…PPPAPSTMVG (69 aa)) lie on the Cytoplasmic side of the membrane. The helical transmembrane segment at 70–90 (WIGWVFSFVFQVIPSILYWAI) threads the bilayer. Over 91-112 (TFCTITLPTWLFTLFSMSLTFT) the chain is Lumenal. Residues 113–133 (MNFTTLLLIALAIVSTVSWFI) traverse the membrane as a helical segment. Residues 134-1527 (RYRFLNMYSR…RTLAPRRASI (1394 aa)) lie on the Cytoplasmic side of the membrane. 4 disordered regions span residues 240-259 (ADHE…GQNV), 299-387 (LSSS…HPDI), 576-596 (EKEQ…PFHR), and 750-785 (AHGE…RRQS). A compositionally biased stretch (basic and acidic residues) spans 355–373 (HLEESRGTPDHDHQPESRT). Residues 685–804 (GGTS…VGSV) and 846–966 (RLTS…IAQR) contribute to the a nucleoside 3',5'-cyclic phosphate site. The segment covering 761–771 (RTTTASSRTSS) has biased composition (low complexity). The PNPLA domain maps to 1224–1388 (LVLGGGGARG…IDNLTVPHMK (165 aa)). Positions 1228-1233 (GGGARG) match the GXGXXG motif. The GXSXG signature appears at 1255 to 1259 (GTSIG). The Nucleophile role is filled by Ser1257. Asp1375 functions as the Proton acceptor in the catalytic mechanism. A DGA/G motif is present at residues 1375–1377 (DGG).

The protein belongs to the NTE family.

It is found in the endoplasmic reticulum membrane. It carries out the reaction a 1-acyl-sn-glycero-3-phosphocholine + H2O = sn-glycerol 3-phosphocholine + a fatty acid + H(+). With respect to regulation, inhibited by organophosphorus esters. In terms of biological role, intracellular phospholipase B that catalyzes the double deacylation of phosphatidylcholine (PC) to glycerophosphocholine (GroPCho). Plays an important role in membrane lipid homeostasis. Responsible for the rapid PC turnover in response to inositol, elevated temperatures, or when choline is present in the growth medium. In Aspergillus terreus (strain NIH 2624 / FGSC A1156), this protein is Lysophospholipase nte1 (nte1).